The primary structure comprises 340 residues: Gallate dioxygenase (340 aa).

Histidine 45 acts as the Proton donor in catalysis. Catalysis depends on histidine 113, which acts as the Proton acceptor.

Belongs to the LigB/MhpB extradiol dioxygenase family. Fe(2+) serves as cofactor.

It catalyses the reaction 3,4,5-trihydroxybenzoate + O2 = (1E)-4-oxobut-1-ene-1,2,4-tricarboxylate + 2 H(+). Functionally, ring-cleavage dioxygenase that acts specifically on gallate to produce the keto-tautomer of 4-oxalomesaconate. Mediates the first step of gallate degradation pathway. In Pseudomonas putida (strain ATCC 47054 / DSM 6125 / CFBP 8728 / NCIMB 11950 / KT2440), this protein is Gallate dioxygenase (galA).